Reading from the N-terminus, the 508-residue chain is Protein S-acyltransferase 18 (508 aa).

The next 2 helical transmembrane spans lie at 17 to 37 and 42 to 62; these read IVGAVIYSVLVAAFYVFLGFF and IAVIALLSVFSSVAVSVIVLF. In terms of domain architecture, DHHC spans 158–208; the sequence is SYCSLCDLEVKRSSKHCRTCNRCVEGFDHHCRWLNNCVGKKNYTTFILLMV. The active-site S-palmitoyl cysteine intermediate is the Cys188. 2 helical membrane-spanning segments follow: residues 203–223 and 250–270; these read FILLMVFVLLMLIIEGGTALA and WALATISIILVLFTAYGSAAM. The segment at 443-468 is disordered; it reads VSPGRFSSPRRRFSGSSSSTVPSPKQ. Positions 456 to 466 are enriched in low complexity; that stretch reads SGSSSSTVPSP.

It belongs to the DHHC palmitoyltransferase family.

The protein resides in the endoplasmic reticulum membrane. The protein localises to the cytoplasmic vesicle membrane. It catalyses the reaction L-cysteinyl-[protein] + hexadecanoyl-CoA = S-hexadecanoyl-L-cysteinyl-[protein] + CoA. Functionally, S-acyltransferase involved in protein lipid modification. The protein is Protein S-acyltransferase 18 (PAT18) of Arabidopsis thaliana (Mouse-ear cress).